We begin with the raw amino-acid sequence, 155 residues long: 3-hydroxyacyl-[acyl-carrier-protein] dehydratase FabZ (155 aa).

Residue His61 is part of the active site.

It belongs to the thioester dehydratase family. FabZ subfamily.

It is found in the cytoplasm. It catalyses the reaction a (3R)-hydroxyacyl-[ACP] = a (2E)-enoyl-[ACP] + H2O. Involved in unsaturated fatty acids biosynthesis. Catalyzes the dehydration of short chain beta-hydroxyacyl-ACPs and long chain saturated and unsaturated beta-hydroxyacyl-ACPs. This is 3-hydroxyacyl-[acyl-carrier-protein] dehydratase FabZ from Synechococcus sp. (strain ATCC 27144 / PCC 6301 / SAUG 1402/1) (Anacystis nidulans).